A 440-amino-acid polypeptide reads, in one-letter code: Adenylyltransferase and sulfurtransferase UBA4 (440 aa).

Residue Met1 is modified to N-acetylmethionine. ATP-binding positions include Gly77, Asp98, 105–109 (SNLHR), Lys122, and 166–167 (DS). Residues Cys208 and Cys211 each coordinate Zn(2+). Cys225 acts as the Glycyl thioester intermediate; for adenylyltransferase activity in catalysis. Zn(2+) is bound by residues Cys286 and Cys289. Phosphoserine is present on Ser326. Residues 339–438 (FLAKHIFLDV…YIDDIDQTIP (100 aa)) form the Rhodanese domain. The active-site Cysteine persulfide intermediate; for sulfurtransferase activity is the Cys397.

It in the N-terminal section; belongs to the HesA/MoeB/ThiF family. UBA4 subfamily. Zn(2+) is required as a cofactor.

It localises to the cytoplasm. It is found in the cytosol. The protein operates within tRNA modification; 5-methoxycarbonylmethyl-2-thiouridine-tRNA biosynthesis. Plays a central role in 2-thiolation of mcm(5)S(2)U at tRNA wobble positions of cytosolic tRNA(Lys), tRNA(Glu) and tRNA(Gln). Acts by mediating the C-terminal thiocarboxylation of sulfur carrier URM1. Its N-terminus first activates URM1 as acyl-adenylate (-COAMP), then the persulfide sulfur on the catalytic cysteine is transferred to URM1 to form thiocarboxylation (-COSH) of its C-terminus. The reaction probably involves hydrogen sulfide that is generated from the persulfide intermediate and that acts as a nucleophile towards URM1. Subsequently, a transient disulfide bond is formed. Does not use thiosulfate as sulfur donor; NFS1 probably acting as a sulfur donor for thiocarboxylation reactions. Prior mcm(5) tRNA modification by the elongator complex is required for 2-thiolation. May also be involved in protein urmylation. This is Adenylyltransferase and sulfurtransferase UBA4 from Saccharomyces cerevisiae (strain YJM789) (Baker's yeast).